Here is a 335-residue protein sequence, read N- to C-terminus: GTPase Obg (335 aa).

Residues 4 to 162 form the Obg domain; sequence GNFVDYTKIY…ADIVLELKVL (159 aa). An OBG-type G domain is found at 163 to 332; it reads ADVGLVGFPN…LKDKLWAMLN (170 aa). GTP contacts are provided by residues 169-176, 194-198, 216-219, 283-286, and 313-315; these read GFPNAGKS, FTTLK, DIPG, SKCD, and SSI. Mg(2+) is bound by residues Ser-176 and Thr-196.

Belongs to the TRAFAC class OBG-HflX-like GTPase superfamily. OBG GTPase family. In terms of assembly, monomer. Requires Mg(2+) as cofactor.

The protein localises to the cytoplasm. An essential GTPase which binds GTP, GDP and possibly (p)ppGpp with moderate affinity, with high nucleotide exchange rates and a fairly low GTP hydrolysis rate. Plays a role in control of the cell cycle, stress response, ribosome biogenesis and in those bacteria that undergo differentiation, in morphogenesis control. This is GTPase Obg from Flavobacterium psychrophilum (strain ATCC 49511 / DSM 21280 / CIP 103535 / JIP02/86).